Here is a 474-residue protein sequence, read N- to C-terminus: uncharacterized protein (474 aa).

This is an uncharacterized protein from Magallana gigas (Pacific oyster).